The following is a 211-amino-acid chain: Thymidylate kinase (211 aa).

ATP is bound at residue 10–17 (GPDGAGKT).

Belongs to the thymidylate kinase family.

The enzyme catalyses dTMP + ATP = dTDP + ADP. Its function is as follows. Phosphorylation of dTMP to form dTDP in both de novo and salvage pathways of dTTP synthesis. This Lactococcus lactis subsp. cremoris (strain SK11) protein is Thymidylate kinase.